Here is a 361-residue protein sequence, read N- to C-terminus: Eukaryotic translation initiation factor 3 subunit F (361 aa).

Low complexity-rich tracts occupy residues 1–11 (MATPVVSASGP) and 21–42 (AAPASASASVPAPTPAPAAAAV). Residues 1-42 (MATPVVSASGPPATPAPAPVAAPASASASVPAPTPAPAAAAV) are disordered. A2 is subject to N-acetylalanine. Phosphoserine; by CDK11; in vitro is present on S50. The segment covering 55 to 78 (AAAATTAAPGQTPASAQAPAQTPA) has biased composition (low complexity). Residues 55–86 (AAAATTAAPGQTPASAQAPAQTPAPALPGPAL) are disordered. Positions 96 to 226 (VRLHPVILAS…IKAYVSTLMG (131 aa)) constitute an MPN domain. Position 242 is an N6-acetyllysine (K242). At S262 the chain carries Phosphoserine.

Belongs to the eIF-3 subunit F family. As to quaternary structure, component of the eukaryotic translation initiation factor 3 (eIF-3) complex, which is composed of 13 subunits: EIF3A, EIF3B, EIF3C, EIF3D, EIF3E, EIF3F, EIF3G, EIF3H, EIF3I, EIF3J, EIF3K, EIF3L and EIF3M. The eIF-3 complex appears to include 3 stable modules: module A is composed of EIF3A, EIF3B, EIF3G and EIF3I; module B is composed of EIF3F, EIF3H, and EIF3M; and module C is composed of EIF3C, EIF3D, EIF3E, EIF3K and EIF3L. EIF3C of module C binds EIF3B of module A and EIF3H of module B, thereby linking the three modules. EIF3J is a labile subunit that binds to the eIF-3 complex via EIF3B. The eIF-3 complex interacts with RPS6KB1 under conditions of nutrient depletion. Mitogenic stimulation leads to binding and activation of a complex composed of MTOR and RPTOR, leading to phosphorylation and release of RPS6KB1 and binding of EIF4B to eIF-3. Interacts with RNF139; the interaction leads to protein translation inhibitions in a ubiquitination-dependent manner. Interacts with DTX1, the interaction is required for deubiquitinating activity towards NOTCH1. Post-translationally, phosphorylation is enhanced upon serum stimulation. Phosphorylated during apoptosis by caspase-processed CDK11.

It is found in the cytoplasm. It catalyses the reaction Thiol-dependent hydrolysis of ester, thioester, amide, peptide and isopeptide bonds formed by the C-terminal Gly of ubiquitin (a 76-residue protein attached to proteins as an intracellular targeting signal).. Functionally, component of the eukaryotic translation initiation factor 3 (eIF-3) complex, which is required for several steps in the initiation of protein synthesis. The eIF-3 complex associates with the 40S ribosome and facilitates the recruitment of eIF-1, eIF-1A, eIF-2:GTP:methionyl-tRNAi and eIF-5 to form the 43S pre-initiation complex (43S PIC). The eIF-3 complex stimulates mRNA recruitment to the 43S PIC and scanning of the mRNA for AUG recognition. The eIF-3 complex is also required for disassembly and recycling of post-termination ribosomal complexes and subsequently prevents premature joining of the 40S and 60S ribosomal subunits prior to initiation. The eIF-3 complex specifically targets and initiates translation of a subset of mRNAs involved in cell proliferation, including cell cycling, differentiation and apoptosis, and uses different modes of RNA stem-loop binding to exert either translational activation or repression. Its function is as follows. Deubiquitinates activated NOTCH1, promoting its nuclear import, thereby acting as a positive regulator of Notch signaling. In Macaca fascicularis (Crab-eating macaque), this protein is Eukaryotic translation initiation factor 3 subunit F.